A 301-amino-acid chain; its full sequence is NTE family protein RssA (301 aa).

The region spanning leucine 8–arginine 168 is the PNPLA domain. The short motif at glycine 39–glycine 43 is the GXSXG element. The active-site Nucleophile is serine 41. The Proton acceptor role is filled by aspartate 155. Positions aspartate 155–alanine 157 match the DGA/G motif.

It belongs to the NTE family.

The sequence is that of NTE family protein RssA (rssA) from Escherichia coli (strain K12).